A 436-amino-acid chain; its full sequence is Adenylosuccinate synthetase (436 aa).

GTP is bound by residues 21–27 and 49–51; these read GDEGKGK and GHT. Asp22 (proton acceptor) is an active-site residue. Residues Asp22 and Gly49 each coordinate Mg(2+). Residues 22-25, 47-50, Thr135, Arg149, Gln230, Thr245, and Arg309 contribute to the IMP site; these read DEGK and NAGH. The active-site Proton donor is the His50. Residue 305 to 311 participates in substrate binding; sequence TTTGRPR. Residues Arg311, 337–339, and 423–425 contribute to the GTP site; these read KVD and SSG.

This sequence belongs to the adenylosuccinate synthetase family. Homodimer. Mg(2+) serves as cofactor.

The protein resides in the cytoplasm. The catalysed reaction is IMP + L-aspartate + GTP = N(6)-(1,2-dicarboxyethyl)-AMP + GDP + phosphate + 2 H(+). It functions in the pathway purine metabolism; AMP biosynthesis via de novo pathway; AMP from IMP: step 1/2. In terms of biological role, plays an important role in the de novo pathway of purine nucleotide biosynthesis. Catalyzes the first committed step in the biosynthesis of AMP from IMP. The polypeptide is Adenylosuccinate synthetase (Thermoplasma volcanium (strain ATCC 51530 / DSM 4299 / JCM 9571 / NBRC 15438 / GSS1)).